Reading from the N-terminus, the 75-residue chain is Putative snRNP Sm-like protein (75 aa).

The Sm domain occupies 4–75 (RPLDVIHRSL…NVLAISPTEE (72 aa)).

Belongs to the snRNP Sm proteins family.

The sequence is that of Putative snRNP Sm-like protein from Pyrococcus abyssi (strain GE5 / Orsay).